Consider the following 154-residue polypeptide: SsrA-binding protein (154 aa).

Belongs to the SmpB family.

The protein localises to the cytoplasm. Functionally, required for rescue of stalled ribosomes mediated by trans-translation. Binds to transfer-messenger RNA (tmRNA), required for stable association of tmRNA with ribosomes. tmRNA and SmpB together mimic tRNA shape, replacing the anticodon stem-loop with SmpB. tmRNA is encoded by the ssrA gene; the 2 termini fold to resemble tRNA(Ala) and it encodes a 'tag peptide', a short internal open reading frame. During trans-translation Ala-aminoacylated tmRNA acts like a tRNA, entering the A-site of stalled ribosomes, displacing the stalled mRNA. The ribosome then switches to translate the ORF on the tmRNA; the nascent peptide is terminated with the 'tag peptide' encoded by the tmRNA and targeted for degradation. The ribosome is freed to recommence translation, which seems to be the essential function of trans-translation. This Staphylococcus aureus (strain Mu3 / ATCC 700698) protein is SsrA-binding protein.